Consider the following 185-residue polypeptide: GTP cyclohydrolase 1 (185 aa).

Residues Cys-76, His-79, and Cys-147 each coordinate Zn(2+).

Belongs to the GTP cyclohydrolase I family. In terms of assembly, toroid-shaped homodecamer, composed of two pentamers of five dimers.

It catalyses the reaction GTP + H2O = 7,8-dihydroneopterin 3'-triphosphate + formate + H(+). Its pathway is cofactor biosynthesis; 7,8-dihydroneopterin triphosphate biosynthesis; 7,8-dihydroneopterin triphosphate from GTP: step 1/1. The sequence is that of GTP cyclohydrolase 1 from Clostridium perfringens (strain 13 / Type A).